The following is a 129-amino-acid chain: Cytochrome c oxidase subunit 5B, mitochondrial (129 aa).

The transit peptide at 1-31 (MASRLLRGVGALAAQALRAHGPRGVAATRSM) directs the protein to the mitochondrion. N6-acetyllysine occurs at positions 68 and 86. Zn(2+) is bound by residues Cys91, Cys93, Cys113, and Cys116. Lys121 is subject to N6-acetyllysine.

Belongs to the cytochrome c oxidase subunit 5B family. In terms of assembly, component of the cytochrome c oxidase (complex IV, CIV), a multisubunit enzyme composed of 14 subunits. The complex is composed of a catalytic core of 3 subunits MT-CO1, MT-CO2 and MT-CO3, encoded in the mitochondrial DNA, and 11 supernumerary subunits COX4I, COX5A, COX5B, COX6A, COX6B, COX6C, COX7A, COX7B, COX7C, COX8 and NDUFA4, which are encoded in the nuclear genome. The complex exists as a monomer or a dimer and forms supercomplexes (SCs) in the inner mitochondrial membrane with NADH-ubiquinone oxidoreductase (complex I, CI) and ubiquinol-cytochrome c oxidoreductase (cytochrome b-c1 complex, complex III, CIII), resulting in different assemblies (supercomplex SCI(1)III(2)IV(1) and megacomplex MCI(2)III(2)IV(2)).

The protein localises to the mitochondrion inner membrane. The protein operates within energy metabolism; oxidative phosphorylation. In terms of biological role, component of the cytochrome c oxidase, the last enzyme in the mitochondrial electron transport chain which drives oxidative phosphorylation. The respiratory chain contains 3 multisubunit complexes succinate dehydrogenase (complex II, CII), ubiquinol-cytochrome c oxidoreductase (cytochrome b-c1 complex, complex III, CIII) and cytochrome c oxidase (complex IV, CIV), that cooperate to transfer electrons derived from NADH and succinate to molecular oxygen, creating an electrochemical gradient over the inner membrane that drives transmembrane transport and the ATP synthase. Cytochrome c oxidase is the component of the respiratory chain that catalyzes the reduction of oxygen to water. Electrons originating from reduced cytochrome c in the intermembrane space (IMS) are transferred via the dinuclear copper A center (CU(A)) of subunit 2 and heme A of subunit 1 to the active site in subunit 1, a binuclear center (BNC) formed by heme A3 and copper B (CU(B)). The BNC reduces molecular oxygen to 2 water molecules using 4 electrons from cytochrome c in the IMS and 4 protons from the mitochondrial matrix. The chain is Cytochrome c oxidase subunit 5B, mitochondrial (Cox5b) from Rattus norvegicus (Rat).